A 308-amino-acid polypeptide reads, in one-letter code: Elongation factor Ts (308 aa).

Positions 80-83 are involved in Mg(2+) ion dislocation from EF-Tu; it reads TDFV.

Belongs to the EF-Ts family.

The protein localises to the cytoplasm. Associates with the EF-Tu.GDP complex and induces the exchange of GDP to GTP. It remains bound to the aminoacyl-tRNA.EF-Tu.GTP complex up to the GTP hydrolysis stage on the ribosome. The polypeptide is Elongation factor Ts (Rhizobium johnstonii (strain DSM 114642 / LMG 32736 / 3841) (Rhizobium leguminosarum bv. viciae)).